Here is a 462-residue protein sequence, read N- to C-terminus: 3-ketoacyl-CoA thiolase 2, peroxisomal (462 aa).

The transit peptide at 1 to 34 directs the protein to the peroxisome; sequence MEKAIERQRVLLEHLRPSSSSSHNYEASLSASAC. The active-site Acyl-thioester intermediate is C138. A disulfide bridge connects residues C138 and C192. Active-site proton acceptor residues include H393 and C425.

Belongs to the thiolase-like superfamily. Thiolase family. As to quaternary structure, forms homodimers. In terms of tissue distribution, accumulates in etiolated cotyledons and in seedlings, also present in roots, flowers and siliques (at protein level). High levels in wounded leaves.

Its subcellular location is the peroxisome. The protein resides in the glyoxysome. It carries out the reaction an acyl-CoA + acetyl-CoA = a 3-oxoacyl-CoA + CoA. It functions in the pathway lipid metabolism; fatty acid metabolism. In terms of biological role, involved in long chain fatty-acid beta-oxidation prior to gluconeogenesis during germination and subsequent seedling growth. Confers sensitivity to 2,4-dichlorophenoxybutiric acid (2,4-DB). Required for local and systemic induction of jasmonic acid (JA) biosynthesis after wounding. Seems to be involved in JA biosynthesis during senescence. May be involved in the positive regulation of abscisic acid-activated signaling pathway. This Arabidopsis thaliana (Mouse-ear cress) protein is 3-ketoacyl-CoA thiolase 2, peroxisomal (PED1).